The sequence spans 171 residues: uncharacterized protein (171 aa).

Positions 123-171 (CTKRDLRNDPPPAYQPDDPLKDLRKNFEKKEKPTWNDVEKKKNGVFEFH) are disordered. Residues 140 to 171 (DPLKDLRKNFEKKEKPTWNDVEKKKNGVFEFH) are compositionally biased toward basic and acidic residues.

This is an uncharacterized protein from Caenorhabditis elegans.